Reading from the N-terminus, the 288-residue chain is Probable chromosome 1-partitioning protein ParB (288 aa).

It belongs to the ParB family.

Involved in chromosome partition. Localize to both poles of the predivisional cell following completion of DNA replication. Binds to the DNA origin of replication. The protein is Probable chromosome 1-partitioning protein ParB (parB1) of Deinococcus radiodurans (strain ATCC 13939 / DSM 20539 / JCM 16871 / CCUG 27074 / LMG 4051 / NBRC 15346 / NCIMB 9279 / VKM B-1422 / R1).